Consider the following 116-residue polypeptide: Flagellar transcriptional regulator FlhD (116 aa).

The protein belongs to the FlhD family. As to quaternary structure, homodimer; disulfide-linked. Forms a heterohexamer composed of two FlhC and four FlhD subunits. Each FlhC binds a FlhD dimer, forming a heterotrimer, and a hexamer assembles by dimerization of two heterotrimers.

Its subcellular location is the cytoplasm. Its function is as follows. Functions in complex with FlhC as a master transcriptional regulator that regulates transcription of several flagellar and non-flagellar operons by binding to their promoter region. Activates expression of class 2 flagellar genes, including fliA, which is a flagellum-specific sigma factor that turns on the class 3 genes. Also regulates genes whose products function in a variety of physiological pathways. The chain is Flagellar transcriptional regulator FlhD from Serratia proteamaculans (strain 568).